Consider the following 255-residue polypeptide: Hydroxyacylglutathione hydrolase (255 aa).

Zn(2+)-binding residues include histidine 56, histidine 58, aspartate 60, histidine 61, histidine 114, aspartate 133, and histidine 171.

This sequence belongs to the metallo-beta-lactamase superfamily. Glyoxalase II family. In terms of assembly, monomer. The cofactor is Zn(2+).

The catalysed reaction is an S-(2-hydroxyacyl)glutathione + H2O = a 2-hydroxy carboxylate + glutathione + H(+). Its pathway is secondary metabolite metabolism; methylglyoxal degradation; (R)-lactate from methylglyoxal: step 2/2. In terms of biological role, thiolesterase that catalyzes the hydrolysis of S-D-lactoyl-glutathione to form glutathione and D-lactic acid. In Rhodopseudomonas palustris (strain BisB18), this protein is Hydroxyacylglutathione hydrolase.